Here is a 192-residue protein sequence, read N- to C-terminus: MSLFAIIYMLFTYLLGSISSDVVICRFTERNDARVTNSNVLQKGEYRLVLVVFLCDVLKGMLPVWVGYYLGLTYFELGMVALAACLGHIFPIFFKFSGGKGVATAFGAIAPIAWGVAGSMLGTWLLIFLFSGYVALSTVVTALILPFYVWWFKPEFTFPVALVCCLLVYRHHENIQRLWRGQEDKIWSKFKK.

5 helical membrane passes run 4 to 24 (FAII…DVVI), 48 to 68 (LVLV…WVGY), 74 to 94 (YFEL…PIFF), 101 to 121 (GVAT…GSML), and 125 to 145 (LLIF…ALIL).

Belongs to the PlsY family. In terms of assembly, probably interacts with PlsX.

Its subcellular location is the cell inner membrane. It catalyses the reaction an acyl phosphate + sn-glycerol 3-phosphate = a 1-acyl-sn-glycero-3-phosphate + phosphate. The protein operates within lipid metabolism; phospholipid metabolism. Catalyzes the transfer of an acyl group from acyl-phosphate (acyl-PO(4)) to glycerol-3-phosphate (G3P) to form lysophosphatidic acid (LPA). This enzyme utilizes acyl-phosphate as fatty acyl donor, but not acyl-CoA or acyl-ACP. The protein is Glycerol-3-phosphate acyltransferase of Histophilus somni (strain 129Pt) (Haemophilus somnus).